Here is a 378-residue protein sequence, read N- to C-terminus: UPF0754 membrane protein BC_0879 (378 aa).

A helical membrane pass occupies residues 357 to 377 (YLGALLGGMIGLVQGLLLLFL).

This sequence belongs to the UPF0754 family.

Its subcellular location is the cell membrane. In Bacillus cereus (strain ATCC 14579 / DSM 31 / CCUG 7414 / JCM 2152 / NBRC 15305 / NCIMB 9373 / NCTC 2599 / NRRL B-3711), this protein is UPF0754 membrane protein BC_0879.